The sequence spans 241 residues: Large ribosomal subunit protein uL3 (241 aa).

Disordered stretches follow at residues 139-164 and 215-241; these read VSHR…KMPG and DAPK…QEGV. Gln151 is subject to N5-methylglutamine. Residues 225–241 are compositionally biased toward low complexity; it reads ANGGEEAAAPAAEQEGV.

This sequence belongs to the universal ribosomal protein uL3 family. In terms of assembly, part of the 50S ribosomal subunit. Forms a cluster with proteins L14 and L19. Methylated by PrmB.

In terms of biological role, one of the primary rRNA binding proteins, it binds directly near the 3'-end of the 23S rRNA, where it nucleates assembly of the 50S subunit. In Rhodopseudomonas palustris (strain HaA2), this protein is Large ribosomal subunit protein uL3.